The sequence spans 263 residues: Purine nucleoside phosphorylase SAV1187 (263 aa).

Positions 79, 124, and 141 each coordinate Zn(2+).

Belongs to the purine nucleoside phosphorylase YfiH/LACC1 family. In terms of assembly, homodimer. Cu(2+) serves as cofactor. It depends on Zn(2+) as a cofactor.

The enzyme catalyses adenosine + phosphate = alpha-D-ribose 1-phosphate + adenine. It carries out the reaction S-methyl-5'-thioadenosine + phosphate = 5-(methylsulfanyl)-alpha-D-ribose 1-phosphate + adenine. It catalyses the reaction inosine + phosphate = alpha-D-ribose 1-phosphate + hypoxanthine. The catalysed reaction is adenosine + H2O + H(+) = inosine + NH4(+). In terms of biological role, purine nucleoside enzyme that catalyzes the phosphorolysis of adenosine and inosine nucleosides, yielding D-ribose 1-phosphate and the respective free bases, adenine and hypoxanthine. Also catalyzes the phosphorolysis of S-methyl-5'-thioadenosine into adenine and S-methyl-5-thio-alpha-D-ribose 1-phosphate. Also has adenosine deaminase activity. This Staphylococcus aureus (strain Mu50 / ATCC 700699) protein is Purine nucleoside phosphorylase SAV1187.